Consider the following 268-residue polypeptide: Putative esterase/lipase 1 (268 aa).

The active site involves His27. The active-site Charge relay system is Ser94.

The protein belongs to the lipase/esterase LIP3/BchO family.

This is Putative esterase/lipase 1 from Mycoplasma genitalium (strain ATCC 33530 / DSM 19775 / NCTC 10195 / G37) (Mycoplasmoides genitalium).